A 379-amino-acid chain; its full sequence is MGSLGISEIYDKNSFNEMEFEFDPSAPPPFRLAEIRNVIPKHCWVKDPLRSLSYVVRDVIFVATLIGIAIHLDSWLFYPLYWAIQGTMFWAIFVLGHDCGHGSFSDSQLLNNVVGHILHSAILVPYHGWRISHKTHHQNHGNVETDESWVPMPEKLYNKVGYSTKFLRYKIPFPLLAYPMYLMKRSPGKSGSHFNPYSDLFQPHERKYVVTSTLCWTVMAALLLYLCTAFGSLQMFKIYGAPYLIFVMWLDFVTYLHHHGYEKKLPWYRGKEWSYLRGGLTTVDRDYGLFNNIHHDIGTHVIHHLFPQIPHYHLREATKAAKPVLGKYYREPKKSGPIPFHLVKDLTRSMKQDHYVSDSGEIVFYQTDPHIFRSAPKDE.

Residues 52 to 72 form a helical membrane-spanning segment; it reads LSYVVRDVIFVATLIGIAIHL. The short motif at 97–101 is the Histidine box-1 element; the sequence is HDCGH. The Histidine box-2 signature appears at 133–137; the sequence is HKTHH. A run of 2 helical transmembrane segments spans residues 213-233 and 236-256; these read TLCW…FGSL and FKIY…VTYL. The short motif at 300-304 is the Histidine box-3 element; it reads HVIHH.

This sequence belongs to the fatty acid desaturase type 1 family.

The protein localises to the endoplasmic reticulum membrane. It functions in the pathway lipid metabolism; polyunsaturated fatty acid biosynthesis. ER (microsomal) omega-3 fatty acid desaturase introduces the third double bond in the biosynthesis of 18:3 fatty acids, important constituents of plant membranes. It is thought to use cytochrome b5 as an electron donor and to act on fatty acids esterified to phosphatidylcholine and, possibly, other phospholipids. This chain is Omega-3 fatty acid desaturase, endoplasmic reticulum (FAD3), found in Nicotiana tabacum (Common tobacco).